The following is a 189-amino-acid chain: UPF0301 protein RrIowa_0061 (189 aa).

This sequence belongs to the UPF0301 (AlgH) family.

In Rickettsia rickettsii (strain Iowa), this protein is UPF0301 protein RrIowa_0061.